A 743-amino-acid polypeptide reads, in one-letter code: MKRRELIRTAFSTIVATAALSSVSARARSEDLHGLTLKKVPPDAIPKNDVPIFSPDDVFTMPEQFWRDFKGKLYIGKAGTDPTLPQNLIDVFVKNANGGTALLSQPIDLNSETLKTFVAAKGALWSASEYSMALHNDNDEQIFYVPDVKNNGVSEFSRRLSQPGGYQLIGEISSFASLRQTRPLFSGAKVRLKGWHDGTEVGGGAFVGEMTPSEDDGGYIASSGQDFHWRRVSDDMNRITLFDFGAVADGKKDCLPAVMAMYHWAQNNNQKLSIQFPAGRFFISSFDISAKYIRFLRLAGAPVNFGYFPATTLVSDGKSEFLFKVNARWVELSNISFEGQIEHSPNGQGFFHNICPAGQYFRGSCLRFTGVGGVSLSLIDTLDCKIDQWYASKCTGDVIRGSWSFTKKGNWDHNTAIELSNFNVQHCRQGKVLNLPRCTQSIIHNGWIEHSEFPGDLSNGQWIVDALSLEGCKNPLIAHCSRLNMRQTNLQSGSWIDNSLANDEWLSSFERGSTRVESYGIAVDGSMKYNYLTSRFRIENHSSQEKWYELGNIHTPDVGDSWEIEVFGQSQFSNGSGTKALMSVTDDRHTGGKAIINLQRKIHGFEASWSVEGSSPINDVVYTTSNDSDTRVFVKLAQWLGSAGVMIKTTAKDRFVTGHCARFDSRMVHSEPPKGEKVHSAVRRFSLHNGLAGIGANEQGDLLVESRHIDAAKVETSRAEGYISLVINGQQVAVPYFALKQNS.

Residues 1–27 form the signal peptide; that stretch reads MKRRELIRTAFSTIVATAALSSVSARA.

The protein to R.meliloti ExoP.

Its subcellular location is the periplasm. Its pathway is glycan metabolism; exopolysaccharide biosynthesis. Functionally, involved in the biosynthesis of amylovoran which functions as a virulence factor. May be involved in the polymerization or late modification of the repeating units. This Erwinia amylovora (Fire blight bacteria) protein is Amylovoran biosynthesis protein AmsF (amsF).